The primary structure comprises 331 residues: Inositol 2-dehydrogenase (331 aa).

This sequence belongs to the Gfo/Idh/MocA family. In terms of assembly, homotetramer.

It catalyses the reaction myo-inositol + NAD(+) = scyllo-inosose + NADH + H(+). Functionally, involved in the oxidation of myo-inositol (MI) to 2-keto-myo-inositol (2KMI or 2-inosose). This chain is Inositol 2-dehydrogenase, found in Renibacterium salmoninarum (strain ATCC 33209 / DSM 20767 / JCM 11484 / NBRC 15589 / NCIMB 2235).